The primary structure comprises 299 residues: Protein N-terminal and lysine N-methyltransferase EFM7 (299 aa).

S-adenosyl-L-methionine contacts are provided by residues W74, G100–G102, D122, W155, and S178.

It belongs to the class I-like SAM-binding methyltransferase superfamily. EFM7 family.

The protein localises to the cytoplasm. In terms of biological role, S-adenosyl-L-methionine-dependent protein methyltransferase that trimethylates the N-terminal glycine 'Gly-2' of elongation factor 1-alpha, before also catalyzing the mono- and dimethylation of 'Lys-3'. The protein is Protein N-terminal and lysine N-methyltransferase EFM7 of Cryptococcus neoformans var. neoformans serotype D (strain B-3501A) (Filobasidiella neoformans).